The primary structure comprises 426 residues: 3-phosphoshikimate 1-carboxyvinyltransferase (426 aa).

K22, S23, and R27 together coordinate 3-phosphoshikimate. K22 contacts phosphoenolpyruvate. Phosphoenolpyruvate contacts are provided by G96 and R124. 7 residues coordinate 3-phosphoshikimate: S170, S171, Q172, S198, D314, N337, and K341. Q172 serves as a coordination point for phosphoenolpyruvate. D314 serves as the catalytic Proton acceptor. The phosphoenolpyruvate site is built by R345, R387, and K412.

This sequence belongs to the EPSP synthase family. Monomer.

The protein localises to the cytoplasm. It carries out the reaction 3-phosphoshikimate + phosphoenolpyruvate = 5-O-(1-carboxyvinyl)-3-phosphoshikimate + phosphate. Its pathway is metabolic intermediate biosynthesis; chorismate biosynthesis; chorismate from D-erythrose 4-phosphate and phosphoenolpyruvate: step 6/7. Catalyzes the transfer of the enolpyruvyl moiety of phosphoenolpyruvate (PEP) to the 5-hydroxyl of shikimate-3-phosphate (S3P) to produce enolpyruvyl shikimate-3-phosphate and inorganic phosphate. The polypeptide is 3-phosphoshikimate 1-carboxyvinyltransferase (Shewanella sp. (strain W3-18-1)).